Here is a 213-residue protein sequence, read N- to C-terminus: Ribonuclease HII (213 aa).

The RNase H type-2 domain occupies 27–213 (HAVAGVDEAG…FRGVKEHVAP (187 aa)). A divalent metal cation is bound by residues aspartate 33, glutamate 34, and aspartate 125.

It belongs to the RNase HII family. It depends on Mn(2+) as a cofactor. Requires Mg(2+) as cofactor.

It is found in the cytoplasm. The catalysed reaction is Endonucleolytic cleavage to 5'-phosphomonoester.. Endonuclease that specifically degrades the RNA of RNA-DNA hybrids. This is Ribonuclease HII from Geobacter metallireducens (strain ATCC 53774 / DSM 7210 / GS-15).